The chain runs to 91 residues: C-C motif chemokine 5 (91 aa).

An N-terminal signal peptide occupies residues Met-1–Ala-23. 2 disulfide bridges follow: Cys-33-Cys-57 and Cys-34-Cys-73.

This sequence belongs to the intercrine beta (chemokine CC) family.

It localises to the secreted. Chemoattractant for blood monocytes, memory T-helper cells and eosinophils. Causes the release of histamine from basophils and activates eosinophils. May activate several chemokine receptors including CCR1, CCR3, CCR4 and CCR5. May also be an agonist of the G protein-coupled receptor GPR75. Together with GPR75, may play a role in neuron survival through activation of a downstream signaling pathway involving the PI3, Akt and MAP kinases. By activating GPR75 may also play a role in insulin secretion by islet cells. The polypeptide is C-C motif chemokine 5 (CCL5) (Cavia porcellus (Guinea pig)).